Reading from the N-terminus, the 418-residue chain is Gamma-glutamyl phosphate reductase (418 aa).

The protein belongs to the gamma-glutamyl phosphate reductase family.

It localises to the cytoplasm. The catalysed reaction is L-glutamate 5-semialdehyde + phosphate + NADP(+) = L-glutamyl 5-phosphate + NADPH + H(+). The protein operates within amino-acid biosynthesis; L-proline biosynthesis; L-glutamate 5-semialdehyde from L-glutamate: step 2/2. Its function is as follows. Catalyzes the NADPH-dependent reduction of L-glutamate 5-phosphate into L-glutamate 5-semialdehyde and phosphate. The product spontaneously undergoes cyclization to form 1-pyrroline-5-carboxylate. The protein is Gamma-glutamyl phosphate reductase of Geotalea uraniireducens (strain Rf4) (Geobacter uraniireducens).